We begin with the raw amino-acid sequence, 487 residues long: UDP-glycosyltransferase 85A7 (487 aa).

UDP-alpha-D-glucose contacts are provided by residues 364-366 (CPQ), 381-389 (HCGWNSTLE), and 403-406 (FSEQ).

This sequence belongs to the UDP-glycosyltransferase family. As to expression, expressed in roots, shoots, leaves and flowers.

This is UDP-glycosyltransferase 85A7 (UGT85A7) from Arabidopsis thaliana (Mouse-ear cress).